A 133-amino-acid polypeptide reads, in one-letter code: Small ribosomal subunit protein uS8 (133 aa).

Belongs to the universal ribosomal protein uS8 family. In terms of assembly, part of the 30S ribosomal subunit. Contacts proteins S5 and S12.

One of the primary rRNA binding proteins, it binds directly to 16S rRNA central domain where it helps coordinate assembly of the platform of the 30S subunit. The polypeptide is Small ribosomal subunit protein uS8 (Syntrophus aciditrophicus (strain SB)).